A 64-amino-acid polypeptide reads, in one-letter code: Probable cytochrome c oxidase subunit 5C-3 (64 aa).

The chain crosses the membrane as a helical span at residues 15-34; sequence SVVKELVIGLTLGLAAGGLW.

Belongs to the cytochrome c oxidase subunit 5C family.

The protein resides in the mitochondrion inner membrane. In terms of biological role, this protein is one of the nuclear-coded polypeptide chains of cytochrome c oxidase, the terminal oxidase in mitochondrial electron transport. This chain is Probable cytochrome c oxidase subunit 5C-3, found in Arabidopsis thaliana (Mouse-ear cress).